Here is a 788-residue protein sequence, read N- to C-terminus: MGIELLCFFFLFLGRDDHVRGGCAMEGAETCGDCLLIGPQCAWCSQENFTHPSGVSERCDTPANLLAKGCQLTFIENPVSQVEILKNKPLSIGRQKNSSDIVQIAPQNLILKLRPGSEQTLQVQVRQTEDYPVDLYYLMDLSASMDDDLNTIKELGSLLSKEMSKLTSNFRLGFGSFVEKPVSPFMKTTPEEIANPCSSIPYICLPTFGFKHILPLTNDAERFNEIVKKQKISANIDTPEGGFDAIMQAAVCKEKIGWRNDSLHLLVFVSDADSHFGMDSKLAGIVIPNDGLCHLDSKNEYSMSTVMEYPTIGQLIDKVVQNNVLLIFAVTQEQVPLYENYAKLIPGATVGLLHKDSGNILQLIISAYEELRSEVELEVLGDTEGLNLSFTAVCNNGTLFPHQKKCLHMKVGETASFNVTVSIPNCERKSRHVIIKPVGLGDTLEILVSPECSCDCQKEVEVNSSKCHNGNGSYQCGVCACNPGHMGPHCECGEDTLSTDSCKETPDHPSCSGRGDCYCGQCICHLSPYGNIYGPYCQCDNFSCVRHKGLLCGDNGDCECGECVCRSGWTGEYCNCTTSTDTCISEDGTLCSGRGDCVCGKCVCTNPGASGPTCERCPTCSDPCNSKRSCIECHLSADGQPGEECVDKCKLAGVTISKEADFSKDSSVSCSLQGENECLITFLISTDNEGKTIIHNISEKDCPKPPNIPMIMLGVSLAILLIGVVLLCIWKLLVSFHDRKEVAKFEAERSKAKWQTGTNPLYRGSTSTFKNVTYKHRDKLKTDLSTDG.

Positions 1–21 (MGIELLCFFFLFLGRDDHVRG) are cleaved as a signal peptide. In terms of domain architecture, PSI spans 22 to 71 (GCAMEGAETCGDCLLIGPQCAWCSQENFTHPSGVSERCDTPANLLAKGCQ). Residues 22–709 (GCAMEGAETC…KDCPKPPNIP (688 aa)) lie on the Extracellular side of the membrane. 19 cysteine pairs are disulfide-bonded: cysteine 23-cysteine 41, cysteine 31-cysteine 454, cysteine 34-cysteine 59, cysteine 44-cysteine 70, cysteine 197-cysteine 204, cysteine 252-cysteine 293, cysteine 394-cysteine 406, cysteine 426-cysteine 452, cysteine 456-cysteine 476, cysteine 467-cysteine 479, cysteine 481-cysteine 490, cysteine 492-cysteine 519, cysteine 502-cysteine 517, cysteine 511-cysteine 522, cysteine 524-cysteine 537, cysteine 539-cysteine 560, cysteine 544-cysteine 558, cysteine 552-cysteine 563, and cysteine 565-cysteine 574. 2 N-linked (GlcNAc...) asparagine glycosylation sites follow: asparagine 48 and asparagine 97. The region spanning 131–371 (YPVDLYYLMD…QLIISAYEEL (241 aa)) is the VWFA domain. Residues aspartate 140, serine 142, and serine 144 each coordinate Mg(2+). Ca(2+) is bound by residues serine 144, aspartate 147, aspartate 148, and glutamate 179. Asparagine 235, aspartate 237, proline 239, and glutamate 240 together coordinate Ca(2+). A Mg(2+)-binding site is contributed by glutamate 240. N-linked (GlcNAc...) asparagine glycosylation is present at asparagine 260. Ca(2+) contacts are provided by aspartate 271 and lysine 355. Asparagine 387, asparagine 396, and asparagine 418 each carry an N-linked (GlcNAc...) asparagine glycan. 4 I-EGF domains span residues 456–491 (CQKE…PHCE), 492–538 (CGED…PYCQ), 539–575 (CDNF…EYCN), and 576–615 (CTTS…PTCE). 2 N-linked (GlcNAc...) asparagine glycosylation sites follow: asparagine 463 and asparagine 471. The N-linked (GlcNAc...) asparagine glycan is linked to asparagine 541. Asparagine 575 is a glycosylation site (N-linked (GlcNAc...) asparagine). 9 disulfides stabilise this stretch: cysteine 576–cysteine 599, cysteine 583–cysteine 597, cysteine 591–cysteine 602, cysteine 604–cysteine 614, cysteine 617–cysteine 620, cysteine 624–cysteine 670, cysteine 630–cysteine 649, cysteine 633–cysteine 645, and cysteine 678–cysteine 702. Asparagine 696 is a glycosylation site (N-linked (GlcNAc...) asparagine). The chain crosses the membrane as a helical span at residues 710–730 (MIMLGVSLAILLIGVVLLCIW). An interaction with HAX1 region spans residues 731-758 (KLLVSFHDRKEVAKFEAERSKAKWQTGT). Residues 731-788 (KLLVSFHDRKEVAKFEAERSKAKWQTGTNPLYRGSTSTFKNVTYKHRDKLKTDLSTDG) are Cytoplasmic-facing.

Belongs to the integrin beta chain family. In terms of assembly, heterodimer of an alpha and a beta subunit. Interacts with FLNB. Interacts with HAX1. ITGAV:ITGB6 interacts with FBN1. ITGAV:ITGB6 interacts with TGFB1.

It localises to the cell membrane. Its subcellular location is the cell junction. It is found in the focal adhesion. Functionally, integrin alpha-V:beta-6 (ITGAV:ITGB6) is a receptor for fibronectin and cytotactin. It recognizes the sequence R-G-D in its ligands. ITGAV:ITGB6 acts as a receptor for fibrillin-1 (FBN1) and mediates R-G-D-dependent cell adhesion to FBN1. Integrin alpha-V:beta-6 (ITGAV:ITGB6) mediates R-G-D-dependent release of transforming growth factor beta-1 (TGF-beta-1) from regulatory Latency-associated peptide (LAP), thereby playing a key role in TGF-beta-1 activation. The polypeptide is Integrin beta-6 (ITGB6) (Cavia porcellus (Guinea pig)).